The sequence spans 403 residues: MASQPPPPPKPWETRRIPGTGPGPGPGPTFQSAELGPTLLTRPGQPTLTRVPPPILPRPSQQTGSGNLNTFRPAYSSFSSGYGAYGNSFYGSYSPYSYGYNGLGYNRLRIDDLPPSRFVQQAEESSRGAFQSIESIVHAFASVSMMMDATFSAVYNSFRAVLDVANHFSRLKIHFTKVFSAFALVRTIRYLYRRLQWMIGLRRGLENEDLWAESEGTVACLGAEDRAANSAKSWPIFLFFAVILGGPYLIWKLLSTHSDEVTDSTNWASGEDDHVVARAEYDFVAVSEEEISFRAGDMLNLALKEQQPRVRGWLLASLDGQTTGLIPANYVKILGKRRGRKTVESSRISKQQQSFTNTTLIKGATAADSLDDQEAAFESVFVETNKVPVASDSTGKNGDKQDL.

Over residues 1–11 (MASQPPPPPKP) the composition is skewed to pro residues. A disordered region spans residues 1 to 69 (MASQPPPPPK…SQQTGSGNLN (69 aa)). Over 1 to 134 (MASQPPPPPK…SSRGAFQSIE (134 aa)) the chain is Peroxisomal matrix. Positions 59–69 (PSQQTGSGNLN) are enriched in polar residues. The chain crosses the membrane as a helical span at residues 135–155 (SIVHAFASVSMMMDATFSAVY). Residues 145–233 (MMMDATFSAV…EDRAANSAKS (89 aa)) are targeting to peroxisomes. The Cytoplasmic portion of the chain corresponds to 156–174 (NSFRAVLDVANHFSRLKIH). A helical transmembrane segment spans residues 175–192 (FTKVFSAFALVRTIRYLY). The tract at residues 175–196 (FTKVFSAFALVRTIRYLYRRLQ) is interaction with PEX19. At 193-233 (RRLQWMIGLRRGLENEDLWAESEGTVACLGAEDRAANSAKS) the chain is on the peroxisomal matrix side. Residues 234 to 254 (WPIFLFFAVILGGPYLIWKLL) traverse the membrane as a helical segment. Residues 255–403 (STHSDEVTDS…TGKNGDKQDL (149 aa)) are Cytoplasmic-facing. Residues 272-336 (DDHVVARAEY…PANYVKILGK (65 aa)) form the SH3 domain. Ser-354 carries the phosphoserine modification.

Belongs to the peroxin-13 family. In terms of assembly, interacts (via SH3 domain) with PEX14 (via SH3-binding motif); forming the PEX13-PEX14 docking complex. Interacts with PEX19.

Its subcellular location is the peroxisome membrane. Component of the PEX13-PEX14 docking complex, a translocon channel that specifically mediates the import of peroxisomal cargo proteins bound to PEX5 receptor. The PEX13-PEX14 docking complex forms a large import pore which can be opened to a diameter of about 9 nm. Mechanistically, PEX5 receptor along with cargo proteins associates with the PEX14 subunit of the PEX13-PEX14 docking complex in the cytosol, leading to the insertion of the receptor into the organelle membrane with the concomitant translocation of the cargo into the peroxisome matrix. Involved in the import of PTS1- and PTS2-type containing proteins. The chain is Peroxisomal membrane protein PEX13 (PEX13) from Bos taurus (Bovine).